The sequence spans 446 residues: Mitochondrial distribution and morphology protein 12 (446 aa).

The SMP-LTD domain maps to 1 to 446 (MSIDINWEAA…VYPSFWTFLV (446 aa)). Residues 75 to 85 (DNEIGDGEVSD) show a composition bias toward acidic residues. Disordered regions lie at residues 75–106 (DNEI…SAAD), 126–145 (PHDV…PIRS), and 188–283 (TPLS…RVRE). A compositionally biased stretch (basic and acidic residues) spans 126–138 (PHDVPIPSKEDPL). Polar residues predominate over residues 233-246 (TGNSRPSTADTLDS). Positions 260 to 274 (SSDDAHPNVLPRRDN) are enriched in basic and acidic residues.

Belongs to the MDM12 family. Component of the ER-mitochondria encounter structure (ERMES) or MDM complex, composed of MMM1, MDM10, MDM12 and MDM34. An MMM1 homodimer associates with one molecule of MDM12 on each side in a pairwise head-to-tail manner, and the SMP-LTD domains of MMM1 and MDM12 generate a continuous hydrophobic tunnel for phospholipid trafficking.

Its subcellular location is the mitochondrion outer membrane. The protein resides in the endoplasmic reticulum membrane. Its function is as follows. Component of the ERMES/MDM complex, which serves as a molecular tether to connect the endoplasmic reticulum (ER) and mitochondria. Components of this complex are involved in the control of mitochondrial shape and protein biogenesis, and function in nonvesicular lipid trafficking between the ER and mitochondria. MDM12 is required for the interaction of the ER-resident membrane protein MMM1 and the outer mitochondrial membrane-resident beta-barrel protein MDM10. The MDM12-MMM1 subcomplex functions in the major beta-barrel assembly pathway that is responsible for biogenesis of all mitochondrial outer membrane beta-barrel proteins, and acts in a late step after the SAM complex. The MDM10-MDM12-MMM1 subcomplex further acts in the TOM40-specific pathway after the action of the MDM12-MMM1 complex. Essential for establishing and maintaining the structure of mitochondria and maintenance of mtDNA nucleoids. This Coccidioides immitis (strain RS) (Valley fever fungus) protein is Mitochondrial distribution and morphology protein 12.